The chain runs to 377 residues: Carboxynorspermidine/carboxyspermidine decarboxylase (377 aa).

An N6-(pyridoxal phosphate)lysine modification is found at lysine 41. Glutamate 238 and aspartate 274 together coordinate substrate.

It belongs to the Orn/Lys/Arg decarboxylase class-II family. NspC subfamily. Homodimer. It depends on pyridoxal 5'-phosphate as a cofactor.

It is found in the cytoplasm. It carries out the reaction carboxynorspermidine + H(+) = norspermidine + CO2. The catalysed reaction is carboxyspermidine + H(+) = spermidine + CO2. Functionally, catalyzes the decarboxylation of carboxynorspermidine and carboxyspermidine. Carboxynorspermidine is decarboxylated 20-fold more efficiently than carboxyspermidine. Exhibits some activity with L-ornithine, but shows no activity with L-arginine, L-lysine or meso-diaminopimelate. The chain is Carboxynorspermidine/carboxyspermidine decarboxylase from Vibrio vulnificus (strain CMCP6).